The sequence spans 354 residues: UDP-3-O-acylglucosamine N-acyltransferase (354 aa).

H257 functions as the Proton acceptor in the catalytic mechanism.

This sequence belongs to the transferase hexapeptide repeat family. LpxD subfamily. Homotrimer.

The catalysed reaction is a UDP-3-O-[(3R)-3-hydroxyacyl]-alpha-D-glucosamine + a (3R)-hydroxyacyl-[ACP] = a UDP-2-N,3-O-bis[(3R)-3-hydroxyacyl]-alpha-D-glucosamine + holo-[ACP] + H(+). It functions in the pathway bacterial outer membrane biogenesis; LPS lipid A biosynthesis. In terms of biological role, catalyzes the N-acylation of UDP-3-O-acylglucosamine using 3-hydroxyacyl-ACP as the acyl donor. Is involved in the biosynthesis of lipid A, a phosphorylated glycolipid that anchors the lipopolysaccharide to the outer membrane of the cell. In Rhizobium johnstonii (strain DSM 114642 / LMG 32736 / 3841) (Rhizobium leguminosarum bv. viciae), this protein is UDP-3-O-acylglucosamine N-acyltransferase.